A 322-amino-acid polypeptide reads, in one-letter code: Beta-ketoacyl-[acyl-carrier-protein] synthase III (322 aa).

Residues C113 and H249 contribute to the active site. An ACP-binding region spans residues 250-254; sequence QANLR. N279 is a catalytic residue.

It belongs to the thiolase-like superfamily. FabH family. In terms of assembly, homodimer.

The protein localises to the cytoplasm. The enzyme catalyses malonyl-[ACP] + acetyl-CoA + H(+) = 3-oxobutanoyl-[ACP] + CO2 + CoA. Its pathway is lipid metabolism; fatty acid biosynthesis. In terms of biological role, catalyzes the condensation reaction of fatty acid synthesis by the addition to an acyl acceptor of two carbons from malonyl-ACP. Catalyzes the first condensation reaction which initiates fatty acid synthesis and may therefore play a role in governing the total rate of fatty acid production. Possesses both acetoacetyl-ACP synthase and acetyl transacylase activities. Its substrate specificity determines the biosynthesis of branched-chain and/or straight-chain of fatty acids. This is Beta-ketoacyl-[acyl-carrier-protein] synthase III from Granulibacter bethesdensis (strain ATCC BAA-1260 / CGDNIH1).